A 262-amino-acid polypeptide reads, in one-letter code: tRNA pseudouridine synthase B (262 aa).

The active-site Nucleophile is the Asp-77.

Belongs to the pseudouridine synthase TruB family. Type 1 subfamily.

It catalyses the reaction uridine(55) in tRNA = pseudouridine(55) in tRNA. Its function is as follows. Responsible for synthesis of pseudouridine from uracil-55 in the psi GC loop of transfer RNAs. In Protochlamydia amoebophila (strain UWE25), this protein is tRNA pseudouridine synthase B.